Reading from the N-terminus, the 91-residue chain is C-C motif chemokine 5 (91 aa).

A signal peptide spans 1–23 (MKVSAARLAVILVATALCAPASA). Intrachain disulfides connect cysteine 33–cysteine 57 and cysteine 34–cysteine 73.

The protein belongs to the intercrine beta (chemokine CC) family.

It localises to the secreted. Its function is as follows. Chemoattractant for blood monocytes, memory T-helper cells and eosinophils. Causes the release of histamine from basophils and activates eosinophils. May activate several chemokine receptors including CCR1, CCR3, CCR4 and CCR5. May also be an agonist of the G protein-coupled receptor GPR75. Together with GPR75, may play a role in neuron survival through activation of a downstream signaling pathway involving the PI3, Akt and MAP kinases. By activating GPR75 may also play a role in insulin secretion by islet cells. In Macaca mulatta (Rhesus macaque), this protein is C-C motif chemokine 5 (CCL5).